The primary structure comprises 435 residues: Probable exopolygalacturonase B (435 aa).

Residues 1–15 (MKFFLATLFASAVSS) form the signal peptide. N-linked (GlcNAc...) asparagine glycosylation is found at Asn59, Asn184, and Asn224. PbH1 repeat units follow at residues 208–239 (SKDVSFDDVYIHAFSTNKSALPKNSDGFDSLN), 240–261 (VDGLTVTNTRVDVGDDCFSPKP), 262–283 (NTTNIFVQNLLCNNTHGVSMGS), 294–315 (IEHAYIENVTLLNGQNGARLKA), and 326–347 (INNITYKNIRIENTDAPVVLDQ). The active-site Proton donor is Asp254. Cysteines 256 and 273 form a disulfide. 2 N-linked (GlcNAc...) asparagine glycosylation sites follow: Asn262 and Asn274. His277 is an active-site residue. Asn301, Asn328, Asn365, and Asn373 each carry an N-linked (GlcNAc...) asparagine glycan. The stretch at 366-388 (VTNILFENISGTSSGKNGKVVAD) is one PbH1 6 repeat. A disulfide bond links Cys391 and Cys397. Residue Asn406 is glycosylated (N-linked (GlcNAc...) asparagine).

Belongs to the glycosyl hydrolase 28 family.

It is found in the secreted. The catalysed reaction is [(1-&gt;4)-alpha-D-galacturonosyl](n) + H2O = alpha-D-galacturonate + [(1-&gt;4)-alpha-D-galacturonosyl](n-1). Specific in hydrolyzing the terminal glycosidic bond of polygalacturonic acid and oligogalacturonates. This is Probable exopolygalacturonase B (pgxB) from Aspergillus flavus (strain ATCC 200026 / FGSC A1120 / IAM 13836 / NRRL 3357 / JCM 12722 / SRRC 167).